A 581-amino-acid chain; its full sequence is Proline--tRNA ligase (581 aa).

It belongs to the class-II aminoacyl-tRNA synthetase family. ProS type 1 subfamily. As to quaternary structure, homodimer.

The protein localises to the cytoplasm. The enzyme catalyses tRNA(Pro) + L-proline + ATP = L-prolyl-tRNA(Pro) + AMP + diphosphate. Catalyzes the attachment of proline to tRNA(Pro) in a two-step reaction: proline is first activated by ATP to form Pro-AMP and then transferred to the acceptor end of tRNA(Pro). As ProRS can inadvertently accommodate and process non-cognate amino acids such as alanine and cysteine, to avoid such errors it has two additional distinct editing activities against alanine. One activity is designated as 'pretransfer' editing and involves the tRNA(Pro)-independent hydrolysis of activated Ala-AMP. The other activity is designated 'posttransfer' editing and involves deacylation of mischarged Ala-tRNA(Pro). The misacylated Cys-tRNA(Pro) is not edited by ProRS. The protein is Proline--tRNA ligase of Variovorax paradoxus (strain S110).